Here is a 905-residue protein sequence, read N- to C-terminus: Nitrate reductase [NADPH] (905 aa).

Residues 1 to 42 are disordered; sequence METSTTTTLLQQERIPENSEPISTHIHTHSLPPTPPGTAKPS. Cys-179 contributes to the Mo-molybdopterin binding site. The 76-residue stretch at 546–621 folds into the Cytochrome b5 heme-binding domain; sequence NRKITIEELK…LPTYHIGTLD (76 aa). 2 residues coordinate heme: His-581 and His-604. In terms of domain architecture, FAD-binding FR-type spans 648–759; it reads KTWSKAILDK…KGPTGKFVYH (112 aa). FAD contacts are provided by residues 702–705, 719–723, 733–735, Ser-783, and Thr-786; these read RSYT, LIKIY, and VMT. NADP(+) is bound at residue 875–884; the sequence is LLLVCGPPPM.

This sequence belongs to the nitrate reductase family. In terms of assembly, homodimer. Requires FAD as cofactor. Heme is required as a cofactor. The cofactor is Mo-molybdopterin.

It carries out the reaction nitrite + NADP(+) + H2O = nitrate + NADPH + H(+). Nitrate reductase is a key enzyme involved in the first step of nitrate assimilation in plants, fungi and bacteria. The sequence is that of Nitrate reductase [NADPH] (NIA) from Fusarium oxysporum (Fusarium vascular wilt).